Reading from the N-terminus, the 275-residue chain is Uronate dehydrogenase (275 aa).

NAD(+) contacts are provided by residues 22 to 23 (GL), 42 to 44 (DIA), 60 to 61 (DL), and 80 to 84 (FGGVS). Substrate is bound by residues serine 84 and 120-122 (SNH). The Proton acceptor role is filled by tyrosine 145. Lysine 149 contacts NAD(+). Serine 174 is a binding site for substrate. An NAD(+)-binding site is contributed by serine 175. A substrate-binding site is contributed by arginine 183.

It belongs to the NAD(P)-dependent epimerase/dehydratase family. Homohexamer.

It carries out the reaction beta-D-galacturonate + NAD(+) = D-galactaro-1,5-lactone + NADH + H(+). It catalyses the reaction beta-D-glucuronate + NAD(+) = D-glucaro-1,5-lactone + NADH + H(+). It functions in the pathway carbohydrate acid metabolism; D-galacturonate degradation via prokaryotic oxidative pathway. Functionally, catalyzes the oxidation of beta-D-galacturonate and beta-D-glucuronate to galactarate and D-glucarate, respectively. Cannot use NADP(+) instead of NAD(+) as cosubstrate. The polypeptide is Uronate dehydrogenase (udh) (Pseudomonas syringae pv. tomato (strain ATCC BAA-871 / DC3000)).